Consider the following 160-residue polypeptide: 2-C-methyl-D-erythritol 2,4-cyclodiphosphate synthase (160 aa).

Residues Asp-10 and His-12 each coordinate a divalent metal cation. 4-CDP-2-C-methyl-D-erythritol 2-phosphate is bound by residues 10–12 (DVH) and 36–37 (HS). His-44 provides a ligand contact to a divalent metal cation. Residues 58-60 (DIG), 63-67 (FPDTD), and Arg-144 each bind 4-CDP-2-C-methyl-D-erythritol 2-phosphate.

This sequence belongs to the IspF family. In terms of assembly, homotrimer. A divalent metal cation serves as cofactor.

It catalyses the reaction 4-CDP-2-C-methyl-D-erythritol 2-phosphate = 2-C-methyl-D-erythritol 2,4-cyclic diphosphate + CMP. The protein operates within isoprenoid biosynthesis; isopentenyl diphosphate biosynthesis via DXP pathway; isopentenyl diphosphate from 1-deoxy-D-xylulose 5-phosphate: step 4/6. Involved in the biosynthesis of isopentenyl diphosphate (IPP) and dimethylallyl diphosphate (DMAPP), two major building blocks of isoprenoid compounds. Catalyzes the conversion of 4-diphosphocytidyl-2-C-methyl-D-erythritol 2-phosphate (CDP-ME2P) to 2-C-methyl-D-erythritol 2,4-cyclodiphosphate (ME-CPP) with a corresponding release of cytidine 5-monophosphate (CMP). The sequence is that of 2-C-methyl-D-erythritol 2,4-cyclodiphosphate synthase from Dechloromonas aromatica (strain RCB).